Here is a 160-residue protein sequence, read N- to C-terminus: Large ribosomal subunit protein eL21B (160 aa).

Residue Lys32 forms a Glycyl lysine isopeptide (Lys-Gly) (interchain with G-Cter in ubiquitin) linkage.

Belongs to the eukaryotic ribosomal protein eL21 family. Component of the large ribosomal subunit (LSU). Mature yeast ribosomes consist of a small (40S) and a large (60S) subunit. The 40S small subunit contains 1 molecule of ribosomal RNA (18S rRNA) and 33 different proteins (encoded by 57 genes). The large 60S subunit contains 3 rRNA molecules (25S, 5.8S and 5S rRNA) and 46 different proteins (encoded by 81 genes).

The protein resides in the cytoplasm. Its function is as follows. Component of the ribosome, a large ribonucleoprotein complex responsible for the synthesis of proteins in the cell. The small ribosomal subunit (SSU) binds messenger RNAs (mRNAs) and translates the encoded message by selecting cognate aminoacyl-transfer RNA (tRNA) molecules. The large subunit (LSU) contains the ribosomal catalytic site termed the peptidyl transferase center (PTC), which catalyzes the formation of peptide bonds, thereby polymerizing the amino acids delivered by tRNAs into a polypeptide chain. The nascent polypeptides leave the ribosome through a tunnel in the LSU and interact with protein factors that function in enzymatic processing, targeting, and the membrane insertion of nascent chains at the exit of the ribosomal tunnel. In Saccharomyces cerevisiae (strain ATCC 204508 / S288c) (Baker's yeast), this protein is Large ribosomal subunit protein eL21B.